The following is a 79-amino-acid chain: Large ribosomal subunit protein bL31 (79 aa).

This sequence belongs to the bacterial ribosomal protein bL31 family. Type A subfamily. As to quaternary structure, part of the 50S ribosomal subunit.

In terms of biological role, binds the 23S rRNA. This is Large ribosomal subunit protein bL31 from Synechococcus sp. (strain CC9902).